The sequence spans 641 residues: Probable licABCH operon regulator (641 aa).

PRD domains lie at 184 to 289 (ILPK…TQSQ) and 296 to 403 (SIEE…KKTE). A phosphohistidine; by HPr mark is found at His219, His278, His333, and His392. The PTS EIIB type-2 domain maps to 407 to 498 (KRCIIVCASG…ILSDEKEKAN (92 aa)). The residue at position 413 (Cys413) is a Phosphocysteine; by EIIA. The PTS EIIA type-2 domain maps to 499–638 (RYLKKELVFF…QELSDVFDQK (140 aa)). At His559 the chain carries Phosphohistidine; by EIIB.

This sequence belongs to the transcriptional antiterminator BglG family.

The regulatory activity of LicR is modulated by phosphorylation and dephosphorylation of the various LicR domains. It becomes activated via phosphoryl group transfer from PEP, EI and HPr on the two conserved histidine residues in the PRD 2 domain, whereas phosphorylation of the EIIA-like domain on His-559 by the PTS EIIB component LicB inactivates LicR. In terms of biological role, positive regulator of the licABCH operon. This chain is Probable licABCH operon regulator (licR), found in Bacillus subtilis (strain 168).